The primary structure comprises 719 residues: Polyribonucleotide nucleotidyltransferase (719 aa).

Mg(2+) is bound by residues aspartate 491 and aspartate 497. A KH domain is found at 558–617; the sequence is PRMLTIKINPEKIRDVIGKGGATIRALTEETGTQIDISDDGTIVIASVDEAQAKEAQRRI. The S1 motif domain occupies 627–695; sequence GQVYDGSVLR…DKGRLRLSVK (69 aa).

This sequence belongs to the polyribonucleotide nucleotidyltransferase family. It depends on Mg(2+) as a cofactor.

Its subcellular location is the cytoplasm. The catalysed reaction is RNA(n+1) + phosphate = RNA(n) + a ribonucleoside 5'-diphosphate. Involved in mRNA degradation. Catalyzes the phosphorolysis of single-stranded polyribonucleotides processively in the 3'- to 5'-direction. The sequence is that of Polyribonucleotide nucleotidyltransferase from Bordetella petrii (strain ATCC BAA-461 / DSM 12804 / CCUG 43448).